Here is a 732-residue protein sequence, read N- to C-terminus: Zinc-exporting P-type ATPase (732 aa).

The HMA domain maps to 29-96 (GRMRVRADWV…AIGGAKHVAA (68 aa)). The next 6 helical transmembrane spans lie at 105 to 123 (HSTE…GGAA), 146 to 164 (MVAT…RGAL), 172 to 186 (AGTD…IASL), 195 to 209 (LTVL…YLQD), 342 to 366 (VGEN…LVTG), and 372 to 390 (MTML…TPTA). Catalysis depends on Asp423, which acts as the 4-aspartylphosphate intermediate. 3 residues coordinate Mg(2+): Asp423, Thr425, and Asp625. 2 consecutive transmembrane segments (helical) span residues 676 to 695 (AVDV…AAGL) and 705 to 724 (PVLA…ANSS).

This sequence belongs to the cation transport ATPase (P-type) (TC 3.A.3) family. Type IB subfamily.

Its subcellular location is the cell membrane. It carries out the reaction Zn(2+)(in) + ATP + H2O = Zn(2+)(out) + ADP + phosphate + H(+). In terms of biological role, zn(2+) efflux transporter which is involved in detoxification of zinc during infection. The polypeptide is Zinc-exporting P-type ATPase (Mycobacterium marinum (strain ATCC BAA-535 / M)).